The chain runs to 125 residues: Large ribosomal subunit protein bL19 (125 aa).

The protein belongs to the bacterial ribosomal protein bL19 family.

Functionally, this protein is located at the 30S-50S ribosomal subunit interface and may play a role in the structure and function of the aminoacyl-tRNA binding site. The chain is Large ribosomal subunit protein bL19 from Ehrlichia chaffeensis (strain ATCC CRL-10679 / Arkansas).